The following is a 154-amino-acid chain: Endoribonuclease YbeY (154 aa).

Residues histidine 114, histidine 118, and histidine 124 each coordinate Zn(2+).

This sequence belongs to the endoribonuclease YbeY family. Zn(2+) serves as cofactor.

The protein resides in the cytoplasm. Its function is as follows. Single strand-specific metallo-endoribonuclease involved in late-stage 70S ribosome quality control and in maturation of the 3' terminus of the 16S rRNA. This chain is Endoribonuclease YbeY, found in Histophilus somni (strain 2336) (Haemophilus somnus).